The primary structure comprises 473 residues: ATP synthase subunit beta (473 aa).

158 to 165 (GGAGVGKT) contributes to the ATP binding site.

Belongs to the ATPase alpha/beta chains family. As to quaternary structure, F-type ATPases have 2 components, CF(1) - the catalytic core - and CF(0) - the membrane proton channel. CF(1) has five subunits: alpha(3), beta(3), gamma(1), delta(1), epsilon(1). CF(0) has three main subunits: a(1), b(2) and c(9-12). The alpha and beta chains form an alternating ring which encloses part of the gamma chain. CF(1) is attached to CF(0) by a central stalk formed by the gamma and epsilon chains, while a peripheral stalk is formed by the delta and b chains.

Its subcellular location is the cell membrane. It carries out the reaction ATP + H2O + 4 H(+)(in) = ADP + phosphate + 5 H(+)(out). Its function is as follows. Produces ATP from ADP in the presence of a proton gradient across the membrane. The catalytic sites are hosted primarily by the beta subunits. The protein is ATP synthase subunit beta of Bacillus velezensis (strain DSM 23117 / BGSC 10A6 / LMG 26770 / FZB42) (Bacillus amyloliquefaciens subsp. plantarum).